The following is a 61-amino-acid chain: ATP synthase subunit J, mitochondrial (61 aa).

The chain crosses the membrane as a helical span at residues 13–32 (LVKYYWPFFVGFGLTFYGVA).

As to quaternary structure, F-type ATP synthases have 2 components, the catalytic core F(1) and the membrane-embedded component F(0), linked together by a central stalk and a peripheral stalk. The central stalk, also called rotor shaft, is often seen as part of F(1). The peripheral stalk is seen as part of F(0). F(0) contains the membrane channel next to the rotor. F-type ATP synthases form dimers but each monomer functions independently in ATP generation. The dimer consists of 18 different polypeptides: ATP1 (subunit alpha, part of F(1), 3 molecules per monomer), ATP2 (subunit beta, part of F(1), 3 molecules per monomer), ATP3 (subunit gamma, part of the central stalk), ATP4 (subunit b, part of the peripheral stalk), ATP5/OSCP (subunit 5/OSCP, part of the peripheral stalk), ATP6 (subunit a, part of the peripheral stalk), ATP7 (subunit d, part of the peripheral stalk), ATP8 (subunit 8, part of the peripheral stalk), OLI1 (subunit c, part of the rotor, 10 molecules per monomer), ATP14 (subunit h, part of the peripheral stalk), ATP15 (subunit epsilon, part of the central stalk), ATP16 (subunit delta, part of the central stalk), ATP17 (subunit f, part of the peripheral stalk), ATP18 (subunit i/j, part of the peripheral stalk). Dimer-specific subunits are ATP19 (subunit k, at interface between monomers), ATP20 (subunit g, at interface between monomers), TIM11 (subunit e, at interface between monomers). Also contains subunit L.

It localises to the mitochondrion inner membrane. Functionally, mitochondrial membrane ATP synthase (F(1)F(0) ATP synthase or Complex V) produces ATP from ADP in the presence of a proton gradient across the membrane which is generated by electron transport complexes of the respiratory chain. F-type ATP synthases consist of two structural domains, F(1) - containing the extramembraneous catalytic core, and F(0) - containing the membrane proton channel, linked together by a central stalk and a peripheral stalk. During catalysis, ATP synthesis in the catalytic domain of F(1) is coupled via a rotary mechanism of the central stalk subunits to proton translocation. Part of the complex F(0) domain. Minor subunit located with subunit a/ATP6 in the membrane. The chain is ATP synthase subunit J, mitochondrial from Pichia angusta (Yeast).